The sequence spans 253 residues: Triosephosphate isomerase (253 aa).

9 to 11 (NWK) is a binding site for substrate. His-96 functions as the Electrophile in the catalytic mechanism. The Proton acceptor role is filled by Glu-169. Residues Gly-175, Ser-215, and 236 to 237 (GG) each bind substrate.

The protein belongs to the triosephosphate isomerase family. As to quaternary structure, homodimer.

The protein resides in the cytoplasm. The enzyme catalyses D-glyceraldehyde 3-phosphate = dihydroxyacetone phosphate. Its pathway is carbohydrate biosynthesis; gluconeogenesis. It participates in carbohydrate degradation; glycolysis; D-glyceraldehyde 3-phosphate from glycerone phosphate: step 1/1. Functionally, involved in the gluconeogenesis. Catalyzes stereospecifically the conversion of dihydroxyacetone phosphate (DHAP) to D-glyceraldehyde-3-phosphate (G3P). This chain is Triosephosphate isomerase, found in Borreliella burgdorferi (strain ZS7) (Borrelia burgdorferi).